The primary structure comprises 526 residues: Transcription factor kayak (526 aa).

2 disordered regions span residues 71–165 (PPLA…GTGG) and 178–221 (RNTN…NKQA). 2 stretches are compositionally biased toward low complexity: residues 78–87 (NNNNNNNNNG) and 133–153 (ISDTSSGATDSTSYQNGHMMG). A compositionally biased stretch (gly residues) spans 154 to 165 (NSGGGNGGGTGG). A compositionally biased stretch (polar residues) spans 178 to 187 (RNTNTSNSAT). The bZIP domain maps to 208 to 271 (EEKRRIRRER…NQLEYFLQAH (64 aa)). The segment at 210–229 (KRRIRRERNKQAAARCRKRR) is basic motif. Residues 236–264 (LTEEVELLEKRGENLKKEMELLNETKNQL) form a leucine-zipper region. The span at 301 to 322 (GSCGSGSSHHNNNSNSNDSSSG) shows a compositional bias: low complexity. 2 disordered regions span residues 301 to 345 (GSCG…DLKP) and 504 to 526 (TSQNKHPLELPTPTTEPSKLVSL). The span at 330–340 (TLNSTGRSNSP) shows a compositional bias: polar residues. At S339 the chain carries Phosphoserine.

Belongs to the bZIP family. Fos subfamily. As to quaternary structure, homodimer. Heterodimer with Jra. The kay-Jra heterodimer binds more stably to the AP-1 site than either of the two proteins alone.

It is found in the nucleus. In terms of biological role, developmentally regulated transcription factor AP-1 binds and recognizes the enhancer DNA sequence: 5'-TGA[CG]TCA-3'. May play a role in the function or determination of a particular subset of cells in the developing embryo. It is able to carry out its function either independently of or in conjunction with Jra. The chain is Transcription factor kayak from Drosophila persimilis (Fruit fly).